The following is a 393-amino-acid chain: MKTLIVLMCSLVVVWARYENEMRLANNRFAVDLLRGLPSSPEKNIFFSPYSISTAMGMVFAGAKGETLKNLYDGFGYLRSGLKEDWVLQAYADHAKQLQVGQSQSTFDVANAAAIHERLALLSAYENTLDSTFHAQLLKVDFVNGGPAAIDEINRWVKQKTHDKIDKLFDGPLDPLTRLVLLNAIFFKGVWSTKFDENATTKKQFLNGGTTPTQVDTMTKSIRIGYKLLPTMRLEIAELPYDGGNYSMVILLPRGSEGIEAFKHSLTDHRLQDYIGHVELREVAVSLPKFKLETEYSLKDSLKSLGITEIFGTQADLSGISSDGELVVSDVVHKAVVEVNEEGTEAAAVSGVAVVTRLIEVPTLELNVNQPFLFFIRNTHTKDLLFAGQVNHL.

Positions 1–16 are cleaved as a signal peptide; sequence MKTLIVLMCSLVVVWA. N-linked (GlcNAc...) asparagine glycosylation is found at N198 and N245.

The protein belongs to the serpin family. Highly expressed in female salivary gland during blood feeding. Expressed in female midgut and ovary during blood feeding.

The protein resides in the secreted. Its function is as follows. Serine protease inhibitor that modulates blood feeding of ticks on vertebrate species. Inhibits host neutrophil elastase (ELANE) and proteinase 3/myeloblastin (PRTN3). Moderately inhibits host chymase, cathepsin G (CTSG), trypsin and alpha-chymotrypsin. Decreases host neutrophil migration. Decreases nitric oxide production by host macrophages. Decreases host complement activity. This Ixodes ricinus (Common tick) protein is Iripin-5.